A 271-amino-acid chain; its full sequence is Formamidopyrimidine-DNA glycosylase (271 aa).

P2 (schiff-base intermediate with DNA) is an active-site residue. E3 (proton donor) is an active-site residue. Residue K58 is the Proton donor; for beta-elimination activity of the active site. 3 residues coordinate DNA: H91, R110, and R152. The segment at 237–271 adopts an FPG-type zinc-finger fold; it reads LVYGREGQPCVHCGRPIRCETIGQRSSYFCTRCQR. Catalysis depends on R261, which acts as the Proton donor; for delta-elimination activity.

It belongs to the FPG family. Monomer. It depends on Zn(2+) as a cofactor.

The enzyme catalyses Hydrolysis of DNA containing ring-opened 7-methylguanine residues, releasing 2,6-diamino-4-hydroxy-5-(N-methyl)formamidopyrimidine.. It catalyses the reaction 2'-deoxyribonucleotide-(2'-deoxyribose 5'-phosphate)-2'-deoxyribonucleotide-DNA = a 3'-end 2'-deoxyribonucleotide-(2,3-dehydro-2,3-deoxyribose 5'-phosphate)-DNA + a 5'-end 5'-phospho-2'-deoxyribonucleoside-DNA + H(+). Its function is as follows. Involved in base excision repair of DNA damaged by oxidation or by mutagenic agents. Acts as a DNA glycosylase that recognizes and removes damaged bases. Has a preference for oxidized purines, such as 7,8-dihydro-8-oxoguanine (8-oxoG). Has AP (apurinic/apyrimidinic) lyase activity and introduces nicks in the DNA strand. Cleaves the DNA backbone by beta-delta elimination to generate a single-strand break at the site of the removed base with both 3'- and 5'-phosphates. This is Formamidopyrimidine-DNA glycosylase from Syntrophotalea carbinolica (strain DSM 2380 / NBRC 103641 / GraBd1) (Pelobacter carbinolicus).